Here is a 281-residue protein sequence, read N- to C-terminus: Bis(5'-nucleosyl)-tetraphosphatase, symmetrical (281 aa).

This sequence belongs to the Ap4A hydrolase family.

The enzyme catalyses P(1),P(4)-bis(5'-adenosyl) tetraphosphate + H2O = 2 ADP + 2 H(+). Functionally, hydrolyzes diadenosine 5',5'''-P1,P4-tetraphosphate to yield ADP. The chain is Bis(5'-nucleosyl)-tetraphosphatase, symmetrical from Acidovorax sp. (strain JS42).